The sequence spans 239 residues: tRNA (guanine-N(7)-)-methyltransferase (239 aa).

Residues Glu-69, Glu-94, Asp-121, and Asp-144 each contribute to the S-adenosyl-L-methionine site. Asp-144 is a catalytic residue. Lys-148 lines the substrate pocket. An interaction with RNA region spans residues 150–155 (RHNKRR). Substrate is bound by residues Asp-180 and 217–220 (TKFE).

This sequence belongs to the class I-like SAM-binding methyltransferase superfamily. TrmB family. In terms of assembly, monomer.

It carries out the reaction guanosine(46) in tRNA + S-adenosyl-L-methionine = N(7)-methylguanosine(46) in tRNA + S-adenosyl-L-homocysteine. It participates in tRNA modification; N(7)-methylguanine-tRNA biosynthesis. Functionally, catalyzes the formation of N(7)-methylguanine at position 46 (m7G46) in tRNA. The sequence is that of tRNA (guanine-N(7)-)-methyltransferase from Salmonella typhi.